The following is a 488-amino-acid chain: Glutamyl-tRNA(Gln) amidotransferase subunit A (488 aa).

Active-site charge relay system residues include Lys77 and Ser152. Residue Ser176 is the Acyl-ester intermediate of the active site.

It belongs to the amidase family. GatA subfamily. As to quaternary structure, heterotrimer of A, B and C subunits.

It carries out the reaction L-glutamyl-tRNA(Gln) + L-glutamine + ATP + H2O = L-glutaminyl-tRNA(Gln) + L-glutamate + ADP + phosphate + H(+). Its function is as follows. Allows the formation of correctly charged Gln-tRNA(Gln) through the transamidation of misacylated Glu-tRNA(Gln) in organisms which lack glutaminyl-tRNA synthetase. The reaction takes place in the presence of glutamine and ATP through an activated gamma-phospho-Glu-tRNA(Gln). The protein is Glutamyl-tRNA(Gln) amidotransferase subunit A of Streptococcus mutans serotype c (strain ATCC 700610 / UA159).